The following is a 181-amino-acid chain: MSRIKKARKPGMSSQPVVVTRNRTDRDVESRELKRKRKRKGLKAGARNAESNAEQARRNAQKKDPRIGSKKPIQLVVDAKQKTTKQERRLTNEQELAMLENDAQLMVLLDRLDSGENLGTGLQKYVDEKLARIEHLMGRLGLLDDEEPEEIEEFPEFAERKAKSDDDLLAEFDDFNMDDFK.

The disordered stretch occupies residues 1-73 (MSRIKKARKP…DPRIGSKKPI (73 aa)). Residues 22–32 (NRTDRDVESRE) are compositionally biased toward basic and acidic residues. Positions 33-42 (LKRKRKRKGL) are enriched in basic residues. The segment covering 55–67 (QARRNAQKKDPRI) has biased composition (basic and acidic residues).

The protein belongs to the YihI family. As to quaternary structure, interacts with Der.

A GTPase-activating protein (GAP) that modifies Der/EngA GTPase function. May play a role in ribosome biogenesis. This Aliivibrio fischeri (strain MJ11) (Vibrio fischeri) protein is Der GTPase-activating protein YihI.